A 213-amino-acid polypeptide reads, in one-letter code: Isopentenyl-diphosphate Delta-isomerase (213 aa).

Positions 1 to 10 are enriched in basic and acidic residues; it reads MRDSMSEADR. A disordered region spans residues 1 to 34; that stretch reads MRDSMSEADRSSPGSGKTDREDETAENATQDVIA. Mn(2+)-binding residues include H51, H58, and H95. One can recognise a Nudix hydrolase domain in the interval 56 to 193; that stretch reads VRHRAFTCLL…RQLRLCPWFE (138 aa). Mg(2+) is bound at residue E113. Positions 142 and 144 each coordinate Mn(2+). E144 is a catalytic residue.

The protein belongs to the IPP isomerase type 1 family. The cofactor is Mg(2+). It depends on Mn(2+) as a cofactor.

Its subcellular location is the cytoplasm. It catalyses the reaction isopentenyl diphosphate = dimethylallyl diphosphate. The protein operates within isoprenoid biosynthesis; dimethylallyl diphosphate biosynthesis; dimethylallyl diphosphate from isopentenyl diphosphate: step 1/1. In terms of biological role, catalyzes the 1,3-allylic rearrangement of the homoallylic substrate isopentenyl (IPP) to its highly electrophilic allylic isomer, dimethylallyl diphosphate (DMAPP). This chain is Isopentenyl-diphosphate Delta-isomerase, found in Halobacterium salinarum (strain ATCC 700922 / JCM 11081 / NRC-1) (Halobacterium halobium).